Reading from the N-terminus, the 792-residue chain is Cullin-4 (792 aa).

A compositionally biased stretch (polar residues) spans 1–10; the sequence is MSLPTKRSTF. A disordered region spans residues 1-43; it reads MSLPTKRSTFSAASASDDSSYSSPPMKKAKNDLHHSPQHPNTA. The span at 11–23 shows a compositional bias: low complexity; the sequence is SAASASDDSSYSS. Residues 724–784 form the Cullin neddylation domain; sequence DRQYQIDAAI…REYLEREKSN (61 aa). Lys738 is covalently cross-linked (Glycyl lysine isopeptide (Lys-Gly) (interchain with G-Cter in NEDD8)).

This sequence belongs to the cullin family. In terms of assembly, interacts with COP10, CSN3, CSN4, CSN5, CSN8, DDB1A, DDB1B, DDB2, DET1 and RBX1. In terms of processing, neddylated (rubylated). Deneddylated via its interaction with the COP9 signalosome (CSN) complex. As to expression, ubiquitous.

It localises to the nucleus. The protein operates within protein modification; protein ubiquitination. Component of the CUL4-RBX1-CDD (COP10-DDB1a-DET1) E3 ubiquitin-protein ligase complex which mediates the ubiquitination and subsequent proteasomal degradation of target proteins. Participates in the CDD complex to light-mediated control of development. May repress photomorphogenesis through enhancing COP1 E3 ubiquitin-protein ligase activity. Acts together with the CUL4-DDB1-COP1-SPA E3 ubiquitin-protein ligase complexes in the repression of photomorphogenesis and flowering time. Component ot the CUL4-RBX1-DDB1-PRL1 E3 ubiquitin-protein ligase complex which mediates ubiquitination and subsequent degradation of AKIN10. Component of the CUL4-RBX1-DDB1-DWA1/DWA2 E3 ubiquitin-protein ligase complex that acts as a negative regulator in abscisic acid (ABA) signaling and may target ABI5 for degradation. The polypeptide is Cullin-4 (CUL4) (Arabidopsis thaliana (Mouse-ear cress)).